Consider the following 487-residue polypeptide: Probable glycine dehydrogenase (decarboxylating) subunit 2 (487 aa).

K269 is subject to N6-(pyridoxal phosphate)lysine.

The protein belongs to the GcvP family. C-terminal subunit subfamily. As to quaternary structure, the glycine cleavage system is composed of four proteins: P, T, L and H. In this organism, the P 'protein' is a heterodimer of two subunits. The cofactor is pyridoxal 5'-phosphate.

It carries out the reaction N(6)-[(R)-lipoyl]-L-lysyl-[glycine-cleavage complex H protein] + glycine + H(+) = N(6)-[(R)-S(8)-aminomethyldihydrolipoyl]-L-lysyl-[glycine-cleavage complex H protein] + CO2. Its function is as follows. The glycine cleavage system catalyzes the degradation of glycine. The P protein binds the alpha-amino group of glycine through its pyridoxal phosphate cofactor; CO(2) is released and the remaining methylamine moiety is then transferred to the lipoamide cofactor of the H protein. The sequence is that of Probable glycine dehydrogenase (decarboxylating) subunit 2 from Prosthecochloris aestuarii (strain DSM 271 / SK 413).